A 101-amino-acid chain; its full sequence is NAD(P)H-quinone oxidoreductase subunit 4L, chloroplastic (101 aa).

Transmembrane regions (helical) follow at residues 2–22 (ILEH…YGLI), 32–52 (MCLE…SDFF), and 61–81 (IFCI…LAIV).

It belongs to the complex I subunit 4L family. In terms of assembly, NDH is composed of at least 16 different subunits, 5 of which are encoded in the nucleus.

It localises to the plastid. It is found in the chloroplast thylakoid membrane. It catalyses the reaction a plastoquinone + NADH + (n+1) H(+)(in) = a plastoquinol + NAD(+) + n H(+)(out). It carries out the reaction a plastoquinone + NADPH + (n+1) H(+)(in) = a plastoquinol + NADP(+) + n H(+)(out). NDH shuttles electrons from NAD(P)H:plastoquinone, via FMN and iron-sulfur (Fe-S) centers, to quinones in the photosynthetic chain and possibly in a chloroplast respiratory chain. The immediate electron acceptor for the enzyme in this species is believed to be plastoquinone. Couples the redox reaction to proton translocation, and thus conserves the redox energy in a proton gradient. This is NAD(P)H-quinone oxidoreductase subunit 4L, chloroplastic from Arabidopsis thaliana (Mouse-ear cress).